Reading from the N-terminus, the 157-residue chain is S-ribosylhomocysteine lyase (157 aa).

H54, H58, and C126 together coordinate Fe cation.

The protein belongs to the LuxS family. Homodimer. Requires Fe cation as cofactor.

It catalyses the reaction S-(5-deoxy-D-ribos-5-yl)-L-homocysteine = (S)-4,5-dihydroxypentane-2,3-dione + L-homocysteine. Functionally, involved in the synthesis of autoinducer 2 (AI-2) which is secreted by bacteria and is used to communicate both the cell density and the metabolic potential of the environment. The regulation of gene expression in response to changes in cell density is called quorum sensing. Catalyzes the transformation of S-ribosylhomocysteine (RHC) to homocysteine (HC) and 4,5-dihydroxy-2,3-pentadione (DPD). The polypeptide is S-ribosylhomocysteine lyase (Bacillus velezensis (strain DSM 23117 / BGSC 10A6 / LMG 26770 / FZB42) (Bacillus amyloliquefaciens subsp. plantarum)).